Consider the following 63-residue polypeptide: Large ribosomal subunit protein uL30 (63 aa).

The protein belongs to the universal ribosomal protein uL30 family. Part of the 50S ribosomal subunit.

The sequence is that of Large ribosomal subunit protein uL30 from Bradyrhizobium sp. (strain ORS 278).